The primary structure comprises 221 residues: MAMQLHAASPDSEHYVAKSPPPPPPLSPHPEPAPAFVKPKSPHVSQGGNAPVATATTPLTPGRVDRARHDHHGGGGGGDEATQLLNGIVLVLRAGAALLSFVAMALVASCRHGDWMDFLRYQEYRYLLGVSVVAFVYSAAQALKNFRRRRRGAADASFLDFAGDQAVAYLLVTASAAALPITIRMRSAVVNVFTDAIAASIALGFLAFAALALSAMLSRHA.

The tract at residues 1–78 (MAMQLHAASP…HDHHGGGGGG (78 aa)) is disordered. Residues 1–87 (MAMQLHAASP…GDEATQLLNG (87 aa)) are Cytoplasmic-facing. A compositionally biased stretch (pro residues) spans 19–33 (SPPPPPPLSPHPEPA). The segment covering 50–62 (APVATATTPLTPG) has biased composition (low complexity). A helical transmembrane segment spans residues 88–108 (IVLVLRAGAALLSFVAMALVA). Residues 109-125 (SCRHGDWMDFLRYQEYR) are Extracellular-facing. The chain crosses the membrane as a helical span at residues 126–146 (YLLGVSVVAFVYSAAQALKNF). The Cytoplasmic portion of the chain corresponds to 147–160 (RRRRRGAADASFLD). The helical transmembrane segment at 161 to 181 (FAGDQAVAYLLVTASAAALPI) threads the bilayer. At 182–196 (TIRMRSAVVNVFTDA) the chain is on the extracellular side. The chain crosses the membrane as a helical span at residues 197-217 (IAASIALGFLAFAALALSAML). Over 218–221 (SRHA) the chain is Cytoplasmic.

It belongs to the Casparian strip membrane proteins (CASP) family. Homodimer and heterodimers.

It is found in the cell membrane. The sequence is that of CASP-like protein 4B1 from Hordeum vulgare subsp. vulgare (Domesticated barley).